A 321-amino-acid chain; its full sequence is Olfactory receptor 5P60 (321 aa).

Topologically, residues 1–28 (MAFLHNGNHTAVTEFILLGLTDDPVLRI) are extracellular. The N-linked (GlcNAc...) asparagine glycan is linked to Asn8. A helical transmembrane segment spans residues 29 to 49 (VLFTIILCIYLVTVSGNLSTI). The Cytoplasmic portion of the chain corresponds to 50–57 (LLIRVSSQ). The chain crosses the membrane as a helical span at residues 58–78 (LHHPMYFFLSHLASADIGYSS). The Extracellular segment spans residues 79-102 (SVTPNMLVNFLVKQNTISYIGCSI). An intrachain disulfide couples Cys100 to Cys192. Residues 103-123 (QFGSAAFFGGLECFLLAVMAY) form a helical membrane-spanning segment. Topologically, residues 124-136 (DRFVAICNPLLYS) are cytoplasmic. A helical transmembrane segment spans residues 137-157 (TKMSTQVCVQLVVGSYIGGFL). Topologically, residues 158–199 (NASFATVSFLFLFFCGPNIINHFFCDFAPLIELSCSDVRISV) are extracellular. The chain crosses the membrane as a helical span at residues 200–220 (LVTSFSAGTVTMLTVLVIAIS). The Cytoplasmic portion of the chain corresponds to 221–240 (YTYILITILKMRSTEGRHKA). Residues 241-261 (FSTCTSHLTAVSLFYGTITFI) form a helical membrane-spanning segment. Over 262–274 (YVMPKSRYSTDQN) the chain is Extracellular. The chain crosses the membrane as a helical span at residues 275–295 (KVVSVFYMVVIPMLNPLIYSL). Over 296-321 (RNNEIKGALRRHLGKKIFSQSNILFY) the chain is Cytoplasmic.

Belongs to the G-protein coupled receptor 1 family.

It localises to the cell membrane. Functionally, potential odorant receptor. The sequence is that of Olfactory receptor 5P60 from Mus musculus (Mouse).